Here is a 369-residue protein sequence, read N- to C-terminus: tRNA-specific 2-thiouridylase MnmA (369 aa).

ATP-binding positions include 12–19 and Met-38; that span reads GMSGGVDS. Positions 98-100 are interaction with target base in tRNA; that stretch reads NPD. Cys-103 serves as the catalytic Nucleophile. Cys-103 and Cys-200 form a disulfide bridge. Gly-128 is a binding site for ATP. An interaction with tRNA region spans residues 150–152; it reads KDQ. Residue Cys-200 is the Cysteine persulfide intermediate of the active site. Positions 312–313 are interaction with tRNA; it reads RY.

Belongs to the MnmA/TRMU family.

The protein resides in the cytoplasm. The enzyme catalyses S-sulfanyl-L-cysteinyl-[protein] + uridine(34) in tRNA + AH2 + ATP = 2-thiouridine(34) in tRNA + L-cysteinyl-[protein] + A + AMP + diphosphate + H(+). Functionally, catalyzes the 2-thiolation of uridine at the wobble position (U34) of tRNA, leading to the formation of s(2)U34. In Tolumonas auensis (strain DSM 9187 / NBRC 110442 / TA 4), this protein is tRNA-specific 2-thiouridylase MnmA.